A 107-amino-acid chain; its full sequence is Essential MCU regulator, mitochondrial (107 aa).

The transit peptide at M1–R52 directs the protein to the mitochondrion. The interval M1–R52 is interaction with MAIP1. At G54–F65 the chain is on the mitochondrial matrix side. A helical transmembrane segment spans residues G66–S85. Positions G81–S85 match the GXXXX[G/A/S] motif. Residues K86–D107 lie on the Mitochondrial intermembrane side of the membrane.

It belongs to the SMDT1/EMRE family. Component of the uniplex complex, composed of MCU, EMRE/SMDT1, MICU1 and MICU2 (or MICU3) in a 4:4:1:1 stoichiometry. The number of EMRE/SMDT1 molecules is hovewer variable, ranging from 1 to 4 copies per uniplex complex, leading to uniplex complexes with distinct gatekeeping profiles. Interacts (via its C-terminal poly-Asp tail) with MCUR1; the interaction is direct. Unprocessed form interacts (via transit peptide) with MAIP1. Post-translationally, undergoes proteolytic degradation in neurons: degraded by AFG3L2 and SPG7 before SMDT1/EMRE assembly with the uniporter complex, limiting the availability of SMDT1/EMRE for MCU assembly and promoting efficient assembly of gatekeeper subunits with MCU.

Its subcellular location is the mitochondrion inner membrane. In terms of biological role, essential regulatory subunit of the mitochondrial calcium uniporter complex (uniplex), a complex that mediates calcium uptake into mitochondria. Required to bridge the calcium-sensing proteins MICU1 with the calcium-conducting subunit MCU. Acts by mediating activation of MCU and retention of MICU1 to the MCU pore, in order to ensure tight regulation of the uniplex complex and appropriate responses to intracellular calcium signaling. The protein is Essential MCU regulator, mitochondrial of Homo sapiens (Human).